Consider the following 326-residue polypeptide: Serine protease 38 (326 aa).

Residues 1-32 (MAAPASVMGPLGPSALGLLLLLLVVAPPRVAA) form the signal peptide. The propeptide at 33–59 (LVHRQPENQGISLTGSVACGRPSMEGK) is activation peptide. One can recognise a Peptidase S1 domain in the interval 60–293 (ILGGVPAPER…FSKWICDNIE (234 aa)). Cysteine 85 and cysteine 101 are disulfide-bonded. Histidine 100 serves as the catalytic Charge relay system. A glycan (N-linked (GlcNAc...) asparagine) is linked at asparagine 125. Aspartate 150 serves as the catalytic Charge relay system. Cystine bridges form between cysteine 183-cysteine 251, cysteine 214-cysteine 230, and cysteine 241-cysteine 269. Catalysis depends on serine 245, which acts as the Charge relay system.

This sequence belongs to the peptidase S1 family.

The protein localises to the secreted. The protein is Serine protease 38 (PRSS38) of Homo sapiens (Human).